The sequence spans 131 residues: Profilin-4 (131 aa).

Cys13 and Cys115 are disulfide-bonded. The short motif at 81-97 is the Involved in PIP2 interaction element; sequence VVIRGKKGTGGITIKKT. Thr111 is modified (phosphothreonine).

This sequence belongs to the profilin family. Occurs in many kinds of cells as a complex with monomeric actin in a 1:1 ratio. Phosphorylated by MAP kinases. As to expression, expressed predominantly in endosperm but is also found at low levels in all tissues examined, including mature and germinated pollen.

The protein resides in the cytoplasm. It localises to the cytoskeleton. Binds to actin and affects the structure of the cytoskeleton. At high concentrations, profilin prevents the polymerization of actin, whereas it enhances it at low concentrations. By binding to PIP2, it inhibits the formation of IP3 and DG. Has a high affinity for poly-proline. The protein is Profilin-4 (PRO4) of Zea mays (Maize).